A 794-amino-acid chain; its full sequence is MMQTKVQNKKRQVAFFILLMLWGEVGSESIQYSVLEETESGTFVANLTKDLGLRVGELASRGARVVFKGNRQHLQFDPQTHDLLLNEKLDREELCGSTEPCVLPFQVLLENPLQFFQASLRVRDINDHAPEFPAREMLLKISEITMPGKIFPLKMAHDLDTGSNGLQRYTISSNPHFHVLTRNRSEGRKFPELVLDKPLDREEQPQLRLTLIALDGGSPPRSGTSEIQIQVLDINDNVPEFAQELYEAQVPENNPLGSLVITVSARDLDAGSFGKVSYALFQVDDVNQPFEINAITGEIRLRKALDFEEIQSYDVDVEATDGGGLSGKCSLVVRVLDVNDNAPELTMSFFISLIPENLPEITVAVFSVSDADSGHNQQVICSIENNLPFLLRPSVENFYTLVTEGALDRESRAEYNITITVTDLGTPRLKTQQSITVQVSDVNDNAPAFTQTSYTLFVRENNSPALHIGSVSATDRDSGINAQVTYSLLPPQDPHLPLSSLVSINADNGHLFALRSLDYEALQSFEFRVGATDRGSPALSSEALVRLLVLDANDNSPFVLYPLQNGSAPCTELVPRAAEPGYLVTKVVAVDGDSGQNAWLSYQLLKATELGLFGVWAHNGEVRTARLLSERDAAKHRLVVLVKDNGEPPRSATATLHVLLVDGFSQPYLPLPEAAPAQAQADSLTVYLVVALASVSSLFLFSVLLFVAVRLCRRSRAASVGRYSVPEGPFPGHLVDVSGTGTLSQSYQYKVCLTGGSETNEFKFLKPIMPNFPPQGTEREMEETPTSRNSFPFS.

Residues 1–27 (MMQTKVQNKKRQVAFFILLMLWGEVGS) form the signal peptide. At 28 to 688 (ESIQYSVLEE…AQADSLTVYL (661 aa)) the chain is on the extracellular side. Cadherin domains follow at residues 34 to 132 (VLEE…APEF), 137 to 241 (MLLK…VPEF), 246 to 345 (YEAQ…APEL), 350 to 449 (FISL…APAF), and 454 to 559 (YTLF…SPFV). Residue N46 is glycosylated (N-linked (GlcNAc...) asparagine). Residues C95 and C101 are joined by a disulfide bond. A glycan (N-linked (GlcNAc...) asparagine) is linked at N183. N416 is a glycosylation site (N-linked (GlcNAc...) asparagine). N565 carries N-linked (GlcNAc...) asparagine glycosylation. The Cadherin 6 domain occupies 566–669 (GSAPCTELVP…LVDGFSQPYL (104 aa)). A helical membrane pass occupies residues 689–709 (VVALASVSSLFLFSVLLFVAV). At 710-794 (RLCRRSRAAS…PTSRNSFPFS (85 aa)) the chain is on the cytoplasmic side. Residues 773–794 (PPQGTEREMEETPTSRNSFPFS) form a disordered region. A compositionally biased stretch (polar residues) spans 784–794 (TPTSRNSFPFS).

In terms of assembly, forms homodimers in trans (molecules expressed by two different cells). Forms promiscuous heterodimers in cis (at the plasma membrane of the same cell) with other protocadherins.

It localises to the cell membrane. Calcium-dependent cell-adhesion protein involved in cells self-recognition and non-self discrimination. Thereby, it is involved in the establishment and maintenance of specific neuronal connections in the brain. The chain is Protocadherin beta-6 from Homo sapiens (Human).